Consider the following 130-residue polypeptide: Small ribosomal subunit protein uS11 (130 aa).

It belongs to the universal ribosomal protein uS11 family. As to quaternary structure, part of the 30S ribosomal subunit. Interacts with proteins S7 and S18. Binds to IF-3.

Functionally, located on the platform of the 30S subunit, it bridges several disparate RNA helices of the 16S rRNA. Forms part of the Shine-Dalgarno cleft in the 70S ribosome. The polypeptide is Small ribosomal subunit protein uS11 (Syntrophus aciditrophicus (strain SB)).